The primary structure comprises 214 residues: MYKIGLTGGIGSGKSRVADMLAEWGASVIDADEISHALTAPGGAAMPAIAREFGPQAVAADGALDRAWMRDLVFREPTARGRLEALLHPLIGLHTEQAAAQARGLYLVFVVPLLVESGRWRGRVDRICVVDCDPATQIARVQKRSGLTEPAIRRIMAAQAARATRLEAADDVIVNDGATSPDTLRARARTLHDRWLALAGAASQPGGKAAGTPE.

Residues 3–202 enclose the DPCK domain; sequence KIGLTGGIGS…DRWLALAGAA (200 aa). 11-16 is a binding site for ATP; that stretch reads GSGKSR.

The protein belongs to the CoaE family.

It localises to the cytoplasm. The catalysed reaction is 3'-dephospho-CoA + ATP = ADP + CoA + H(+). Its pathway is cofactor biosynthesis; coenzyme A biosynthesis; CoA from (R)-pantothenate: step 5/5. Catalyzes the phosphorylation of the 3'-hydroxyl group of dephosphocoenzyme A to form coenzyme A. The protein is Dephospho-CoA kinase of Bordetella pertussis (strain Tohama I / ATCC BAA-589 / NCTC 13251).